A 340-amino-acid polypeptide reads, in one-letter code: Probable sugar phosphate/phosphate translocator At3g14410 (340 aa).

The next 10 membrane-spanning stretches (helical) occupy residues 12 to 32 (EFVT…QIFF), 44 to 64 (FPYP…LCFL), 80 to 100 (LEIY…TLWL), 110 to 130 (VAFA…LGVA), 141 to 161 (LLIM…ELNI), 163 to 183 (WIGV…LIFM), 197 to 217 (ISLM…PWIF), 234 to 254 (VVLT…FLVI), 260 to 282 (LTIR…LLFA), and 286 to 305 (LTII…AAYN). Positions 320–340 (ETPGDAESIPLVSQGNTNTER) are disordered. Over residues 330–340 (LVSQGNTNTER) the composition is skewed to polar residues.

Belongs to the TPT transporter family. TPT (TC 2.A.7.9) subfamily.

Its subcellular location is the membrane. The polypeptide is Probable sugar phosphate/phosphate translocator At3g14410 (Arabidopsis thaliana (Mouse-ear cress)).